The primary structure comprises 452 residues: BUB3-interacting and GLEBS motif-containing protein ZNF207 (452 aa).

The segment at Met-1–Glu-92 is microtubule-binding region. C2H2-type zinc fingers lie at residues Pro-11 to His-34 and Phe-35 to His-58. Disordered regions lie at residues Gln-99 to Gln-131 and Ser-298 to Thr-330. Residues Asp-113–Thr-123 are compositionally biased toward acidic residues. The tract at residues Ala-329 to Gln-361 is GLEBS.

As to quaternary structure, interacts (via GLEBS region) with bub3.

The protein resides in the nucleus. The protein localises to the chromosome. Its subcellular location is the centromere. It is found in the kinetochore. It localises to the cytoplasm. The protein resides in the cytoskeleton. The protein localises to the spindle. In terms of biological role, kinetochore- and microtubule-binding protein that plays a key role in spindle assembly. Znf207/BuGZ is mainly composed of disordered low-complexity regions and undergoes phase transition or coacervation to form temperature-dependent liquid droplets. Coacervation promotes microtubule bundling and concentrates tubulin, promoting microtubule polymerization and assembly of spindle and spindle matrix by concentrating its building blocks. This chain is BUB3-interacting and GLEBS motif-containing protein ZNF207, found in Xenopus laevis (African clawed frog).